Here is a 263-residue protein sequence, read N- to C-terminus: Copper homeostasis protein cutC homolog (263 aa).

It belongs to the CutC family.

Involved in copper homeostasis. The sequence is that of Copper homeostasis protein cutC homolog from Drosophila melanogaster (Fruit fly).